The sequence spans 401 residues: 1-deoxy-D-xylulose 5-phosphate reductoisomerase (401 aa).

Thr11, Gly12, Ser13, Ile14, Arg38, Asn39, and Asn125 together coordinate NADPH. Lys126 serves as a coordination point for 1-deoxy-D-xylulose 5-phosphate. Residue Glu127 coordinates NADPH. Asp151 contacts Mn(2+). The 1-deoxy-D-xylulose 5-phosphate site is built by Ser152, Glu153, Ser179, and His202. Glu153 serves as a coordination point for Mn(2+). Gly208 is a binding site for NADPH. 1-deoxy-D-xylulose 5-phosphate is bound by residues Ser215, Asn220, Lys221, and Glu224. Residue Glu224 coordinates Mn(2+).

This sequence belongs to the DXR family. Mg(2+) serves as cofactor. It depends on Mn(2+) as a cofactor.

It catalyses the reaction 2-C-methyl-D-erythritol 4-phosphate + NADP(+) = 1-deoxy-D-xylulose 5-phosphate + NADPH + H(+). Its pathway is isoprenoid biosynthesis; isopentenyl diphosphate biosynthesis via DXP pathway; isopentenyl diphosphate from 1-deoxy-D-xylulose 5-phosphate: step 1/6. Catalyzes the NADPH-dependent rearrangement and reduction of 1-deoxy-D-xylulose-5-phosphate (DXP) to 2-C-methyl-D-erythritol 4-phosphate (MEP). This is 1-deoxy-D-xylulose 5-phosphate reductoisomerase from Paraburkholderia phytofirmans (strain DSM 17436 / LMG 22146 / PsJN) (Burkholderia phytofirmans).